The chain runs to 381 residues: Succinyl-diaminopimelate desuccinylase (381 aa).

Residue H68 participates in Zn(2+) binding. D70 is a catalytic residue. Residue D101 coordinates Zn(2+). E135 serves as the catalytic Proton acceptor. Zn(2+)-binding residues include E136, E164, and H350.

It belongs to the peptidase M20A family. DapE subfamily. In terms of assembly, homodimer. It depends on Zn(2+) as a cofactor. Co(2+) is required as a cofactor.

The catalysed reaction is N-succinyl-(2S,6S)-2,6-diaminopimelate + H2O = (2S,6S)-2,6-diaminopimelate + succinate. It participates in amino-acid biosynthesis; L-lysine biosynthesis via DAP pathway; LL-2,6-diaminopimelate from (S)-tetrahydrodipicolinate (succinylase route): step 3/3. Catalyzes the hydrolysis of N-succinyl-L,L-diaminopimelic acid (SDAP), forming succinate and LL-2,6-diaminopimelate (DAP), an intermediate involved in the bacterial biosynthesis of lysine and meso-diaminopimelic acid, an essential component of bacterial cell walls. The polypeptide is Succinyl-diaminopimelate desuccinylase (Neisseria gonorrhoeae (strain ATCC 700825 / FA 1090)).